Reading from the N-terminus, the 434-residue chain is Enolase (434 aa).

Glutamine 163 is a binding site for (2R)-2-phosphoglycerate. Glutamate 205 acts as the Proton donor in catalysis. Mg(2+) is bound by residues aspartate 242, glutamate 291, and aspartate 318. 4 residues coordinate (2R)-2-phosphoglycerate: lysine 343, arginine 372, serine 373, and lysine 394. Residue lysine 343 is the Proton acceptor of the active site.

The protein belongs to the enolase family. Requires Mg(2+) as cofactor.

The protein localises to the cytoplasm. Its subcellular location is the secreted. It localises to the cell surface. It catalyses the reaction (2R)-2-phosphoglycerate = phosphoenolpyruvate + H2O. It participates in carbohydrate degradation; glycolysis; pyruvate from D-glyceraldehyde 3-phosphate: step 4/5. In terms of biological role, catalyzes the reversible conversion of 2-phosphoglycerate (2-PG) into phosphoenolpyruvate (PEP). It is essential for the degradation of carbohydrates via glycolysis. In Streptococcus intermedius, this protein is Enolase.